The sequence spans 429 residues: Formate-dependent phosphoribosylglycinamide formyltransferase (429 aa).

N(1)-(5-phospho-beta-D-ribosyl)glycinamide contacts are provided by residues 26-27 and Glu-86; that span reads EL. ATP contacts are provided by residues Arg-118, Lys-159, 199-202, and Glu-207; that span reads EEHI. The ATP-grasp domain maps to 123 to 319; the sequence is ETLAREAKVP…EFGLHLRAVL (197 aa). Mg(2+) contacts are provided by Glu-276 and Glu-288. Residues Asp-295, Lys-375, and 382-383 each bind N(1)-(5-phospho-beta-D-ribosyl)glycinamide; that span reads RR.

Belongs to the PurK/PurT family. As to quaternary structure, homodimer.

The enzyme catalyses N(1)-(5-phospho-beta-D-ribosyl)glycinamide + formate + ATP = N(2)-formyl-N(1)-(5-phospho-beta-D-ribosyl)glycinamide + ADP + phosphate + H(+). It functions in the pathway purine metabolism; IMP biosynthesis via de novo pathway; N(2)-formyl-N(1)-(5-phospho-D-ribosyl)glycinamide from N(1)-(5-phospho-D-ribosyl)glycinamide (formate route): step 1/1. Involved in the de novo purine biosynthesis. Catalyzes the transfer of formate to 5-phospho-ribosyl-glycinamide (GAR), producing 5-phospho-ribosyl-N-formylglycinamide (FGAR). Formate is provided by PurU via hydrolysis of 10-formyl-tetrahydrofolate. This is Formate-dependent phosphoribosylglycinamide formyltransferase from Thermococcus kodakarensis (strain ATCC BAA-918 / JCM 12380 / KOD1) (Pyrococcus kodakaraensis (strain KOD1)).